The chain runs to 569 residues: Protein THEMIS3 (569 aa).

CABIT regions lie at residues 1–254 (MEQT…ARLD) and 255–523 (RKPR…EERS).

This sequence belongs to the themis family. As to expression, specifically expressed in the intestine.

The polypeptide is Protein THEMIS3 (Themis3) (Mus musculus (Mouse)).